The following is a 623-amino-acid chain: MNNTLNQHYEEKVRPCIDLIDSLRSLGVEKDLALPAIAVIGDQSSGKSSVLEALSGVALPRGSGIVTRCPLELKMKRKREGEEWHGKISYQDHEEEIEDPSDVEKKIREAQDEMAGVGVGISDDLISLEIGSPDVPDLTLIDLPGIARVAVKGQPENIGEQIKRLIRKFIMKQETINLVVVPCNVDIATTEALQMAQEVDPEGERTLGILTKPDLVDKGTEETVVDIVHNEVIHLTKGYMIVKCRGQKEIMERVSLTEATEREKAFFKEHAHLSTLYDEGHATIPKLAEKLTLELVHHIEKSLPRLEEQIEAKLSETHAELERYGTGPPEDSAERIYFLIDKVTAFTQDAINLSTGEELKSGVRLNVFSTLRQEFGKWKLHLDRSGENFNQRIEGEVSNYEKTYRGRELPGFINYKTFEVMVKDQIKQLEEPAVKKLKEISDAVRKVFLLLAQSSFTGFPNLLKSAKTKIEAIKQVNESTAESMLRTQFKMEMIVYTQDSTYSHSLSERKREEEDDRPLPTPKIRSTIFSTDNHATLQEMMLHLKSYYRISSQRLADQIPMVIRYLVLQEFASQLQREMLQTLQEKDNIEQLLKEDFDIGSKRAALQNKLKRLMKARSYLVEF.

A Dynamin-type G domain is found at Asp31–Pro304. The tract at residues Gly41–Ser48 is G1 motif. Position 41 to 48 (Gly41 to Ser48) interacts with GTP. The tract at residues Val66–Arg68 is G2 motif. The tract at residues Asp142–Gly145 is G3 motif. GTP is bound by residues Asp142–Ile146 and Thr211–Asp214. The G4 motif stretch occupies residues Thr211–Asp214. The tract at residues Lys243–Gly246 is G5 motif. The GED domain maps to Leu537 to Phe623.

The protein belongs to the TRAFAC class dynamin-like GTPase superfamily. Dynamin/Fzo/YdjA family.

The protein localises to the cytoplasm. In terms of biological role, does not inhibit strain RB-1 of the fish pathogen, infectious hematopoietic necrosis virus (IHNV). The protein is Interferon-induced GTP-binding protein Mx3 of Oncorhynchus mykiss (Rainbow trout).